Here is a 1173-residue protein sequence, read N- to C-terminus: 3-hydroxy-3-methylglutaryl coenzyme A reductase mlcD (1173 aa).

2 N-linked (GlcNAc...) asparagine glycosylation sites follow: N143 and N186. Residues 241 to 420 form the SSD domain; sequence DVVVMVLGYI…FTFYTAILSI (180 aa). 7 helical membrane passes run 242-262, 272-292, 302-322, 368-388, 397-417, 479-499, and 594-614; these read VVVMVLGYISMHLTFVSLFLS, LATSVLLSSTFAFLLGLDVAI, LLSEGLPFLVVIVGFEKSITL, NIVCHYVVEILLLVIGAVLGI, VLAALILFFDCLLLFTFYTAI, FWMVVGFLIVNLVNIGSTLFQ, and VLSKWVFVALALSVALNSYLF. Residues 498 to 673 are linker; the sequence is FQASSSGSLS…FTPTTTDSDS (176 aa). Polar residues predominate over residues 647–666; that stretch reads NQTPQIQSSLQAPQTRVFTP. Residues 647 to 669 are disordered; the sequence is NQTPQIQSSLQAPQTRVFTPTTT. The interval 674 to 1133 is catalytic; sequence DASLVLIKAS…LVKAHMAHNR (460 aa). E822 (charge relay system) is an active-site residue. N886 is a glycosylation site (N-linked (GlcNAc...) asparagine). The active-site Charge relay system is the K956. A glycan (N-linked (GlcNAc...) asparagine) is linked at N997. The active-site Charge relay system is D1032. Catalysis depends on H1128, which acts as the Proton donor. Residue N1132 is glycosylated (N-linked (GlcNAc...) asparagine). Positions 1132–1173 are disordered; that stretch reads NRSAPASSAPSRSVSPSGGTRTVPVPNNALRPSAAATDRARR. The segment covering 1133 to 1148 has biased composition (low complexity); it reads RSAPASSAPSRSVSPS.

This sequence belongs to the HMG-CoA reductase family.

It localises to the endoplasmic reticulum membrane. It carries out the reaction (R)-mevalonate + 2 NADP(+) + CoA = (3S)-3-hydroxy-3-methylglutaryl-CoA + 2 NADPH + 2 H(+). It functions in the pathway polyketide biosynthesis. Its function is as follows. HMG-CoA reductase; part of the gene cluster that mediates the biosynthesis of compactin, also known as mevastatin or ML-236B, and which acts as a potent competitive inhibitor of HMG-CoA reductase. Compactin biosynthesis is performed in two stages. The first stage is catalyzed by the nonaketide synthase mlcA, which belongs to type I polyketide synthases and catalyzes the iterative nine-step formation of the polyketide. This PKS stage is completed by the action of dehydrogenase mlcG, which catalyzes the NADPH-dependent reduction of the unsaturated tetra-, penta- and heptaketide intermediates that arise during the mlcA-mediated biosynthesis of the nonaketide chain and leads to dihydro-ML-236C carboxylate. Covalently bound dihydro-ML-236C carboxylate is released from mlcA by the mlcF esterase. Conversion of dihydro-ML-236C carboxylate into ML-236A carboxylate is subsequently performed with the participation of molecular oxygen and P450 monoogygenase mlcC. Finally, mlcH performs the conversion of ML-236A carboxylate to ML-236B/compactin carboxylate through the addition of the side-chain diketide moiety produced by the diketide synthase mlcB. HMG-CoA reductase mlcD may act as a down-regulator of compactin production and is involved in conferring resistance to ML-236B/compactin. In Penicillium citrinum, this protein is 3-hydroxy-3-methylglutaryl coenzyme A reductase mlcD.